The chain runs to 267 residues: tRNA (guanine-N(1)-)-methyltransferase (267 aa).

S-adenosyl-L-methionine is bound by residues Gly119 and 139-144 (IGDYVL).

The protein belongs to the RNA methyltransferase TrmD family. In terms of assembly, homodimer.

It is found in the cytoplasm. It carries out the reaction guanosine(37) in tRNA + S-adenosyl-L-methionine = N(1)-methylguanosine(37) in tRNA + S-adenosyl-L-homocysteine + H(+). Specifically methylates guanosine-37 in various tRNAs. This Chromohalobacter salexigens (strain ATCC BAA-138 / DSM 3043 / CIP 106854 / NCIMB 13768 / 1H11) protein is tRNA (guanine-N(1)-)-methyltransferase.